Reading from the N-terminus, the 1306-residue chain is Kinesin-like protein KIN-14L (1306 aa).

The region spanning 142–456 (NVKVFCRSRP…LSFSARAKNA (315 aa)) is the Kinesin motor domain. 223 to 230 (GQSRSGKT) lines the ATP pocket. Coiled-coil stretches lie at residues 466–507 (IKKW…ANDQ) and 540–595 (HRIE…ALNS). Polar residues-rich tracts occupy residues 592 to 611 (ALNS…SVIS) and 660 to 677 (LGSS…TNAQ). 3 disordered regions span residues 592–627 (ALNS…SVTK), 657–710 (KSGL…SGAI), and 849–881 (KSHT…RTSL). Residues 855 to 867 (SRSSSRGSSPGRS) are compositionally biased toward low complexity.

This sequence belongs to the TRAFAC class myosin-kinesin ATPase superfamily. Kinesin family. KIN-14 subfamily.

This Oryza sativa subsp. japonica (Rice) protein is Kinesin-like protein KIN-14L.